The primary structure comprises 284 residues: Bifunctional protein FolD (284 aa).

NADP(+)-binding positions include 165–167, Ser190, and Ile231; that span reads GRS.

Belongs to the tetrahydrofolate dehydrogenase/cyclohydrolase family. Homodimer.

The enzyme catalyses (6R)-5,10-methylene-5,6,7,8-tetrahydrofolate + NADP(+) = (6R)-5,10-methenyltetrahydrofolate + NADPH. It carries out the reaction (6R)-5,10-methenyltetrahydrofolate + H2O = (6R)-10-formyltetrahydrofolate + H(+). It functions in the pathway one-carbon metabolism; tetrahydrofolate interconversion. Functionally, catalyzes the oxidation of 5,10-methylenetetrahydrofolate to 5,10-methenyltetrahydrofolate and then the hydrolysis of 5,10-methenyltetrahydrofolate to 10-formyltetrahydrofolate. This chain is Bifunctional protein FolD, found in Dechloromonas aromatica (strain RCB).